We begin with the raw amino-acid sequence, 307 residues long: Leucine-rich repeat-containing protein 59 (307 aa).

Met1 is modified (N-acetylmethionine). Position 2 is an N-acetylthreonine; in Leucine-rich repeat-containing protein 59, N-terminally processed (Thr2). Residues 2 to 244 (TKAGSKGGNL…KPPPRKHTRS (243 aa)) lie on the Cytoplasmic side of the membrane. LRR repeat units lie at residues 10–31 (NLRD…NEVP), 40–62 (KATV…CGLT), 63–84 (HLVK…FGRL), 86–107 (NLQH…FAQL), and 109–128 (NLKW…AKVA). Residues Ser23 and Ser25 each carry the phosphoserine modification. N6-succinyllysine is present on Lys73. The residue at position 135 (Lys135) is an N6-acetyllysine. A coiled-coil region spans residues 148-216 (MKAVQADQER…KASKREQEKK (69 aa)). The interval 150–241 (AVQADQERER…RPRKPPPRKH (92 aa)) is disordered. The segment covering 154–221 (DQERERQRRL…EQEKKPKKEA (68 aa)) has biased composition (basic and acidic residues). Residues 229–241 (SGSRPRKPPPRKH) are compositionally biased toward basic residues. A helical transmembrane segment spans residues 245–265 (WAVLKVLLLLLLLCVAGGLVV). Over 266 to 307 (CRVTGLHQQPLCTSVNTIYDNAVQGLRHHEILQWVLQTDSQQ) the chain is Lumenal.

Can form homodimers. Interacts with SGO1. Interacts with FGF1.

It localises to the microsome membrane. The protein localises to the endoplasmic reticulum membrane. Its subcellular location is the nucleus envelope. Functionally, required for nuclear import of FGF1, but not that of FGF2. Might regulate nuclear import of exogenous FGF1 by facilitating interaction with the nuclear import machinery and by transporting cytosolic FGF1 to, and possibly through, the nuclear pores. The chain is Leucine-rich repeat-containing protein 59 (Lrrc59) from Mus musculus (Mouse).